The sequence spans 498 residues: ADP,ATP carrier protein 1 (498 aa).

Over 1 to 33 the chain is Cytoplasmic; sequence MNNPKNDNYLSELSKVIWPIERYENKKFLPMAF. Residues 34 to 54 form a helical membrane-spanning segment; sequence MMFCILLNYSTLRSIKDGFVV. A disulfide bond links Cys-37 and Cys-85. Topologically, residues 55-67 are extracellular; the sequence is TDIGAEAISFLKT. A helical membrane pass occupies residues 68-88; sequence YIVLPSAVIAMVIYVKLCDIL. At 89-92 the chain is on the cytoplasmic side; it reads KQEN. The helical transmembrane segment at 93 to 113 threads the bilayer; sequence VFYVITSFFLGYFALFAFVLY. At 114–147 the chain is on the extracellular side; it reads PYPDLVHPDPETIESWSVAYPNVKWFIRIVGKWS. A helical transmembrane segment spans residues 148–168; the sequence is FASFYTMAELWGTMMLSLLFW. The Cytoplasmic segment spans residues 169–184; the sequence is QFANQITKTDEAKRFY. Residues 185 to 205 form a helical membrane-spanning segment; the sequence is SMFGLLANLALPVTSVIIGYC. Topologically, residues 206–218 are extracellular; it reads LHEKTQIVAEHLK. A helical membrane pass occupies residues 219–239; it reads FVPLFVIMITSSFLVILTYRW. At 240–279 the chain is on the cytoplasmic side; that stretch reads MNKNVLTDPRLYDPALVKEKKAKAKMSLIDSFKMIFTSKY. Residues 280–300 form a helical membrane-spanning segment; that stretch reads VGYIALLLIAYGVSVNLVEGV. Residues 301–320 are Extracellular-facing; it reads WKSKVKELYPTKEAYTIYMG. Residues 321 to 341 traverse the membrane as a helical segment; that stretch reads KFQFYQGWVAIAFMLIGSNIL. Over 342 to 348 the chain is Cytoplasmic; it reads RKVSWLT. A helical transmembrane segment spans residues 349 to 369; it reads AAMITPLMMLITGAAFFAFIF. Residues 370-379 are Extracellular-facing; sequence FDSVIAMHLT. A helical membrane pass occupies residues 380 to 400; it reads GILASGPLALAVMIGMIQNVL. At 401-438 the chain is on the cytoplasmic side; that stretch reads SKGVKYSLFDATKNMAYIPLDKDLRVKGQAAVEVIGGR. 436 to 442 serves as a coordination point for ATP; the sequence is GGRFGKS. Residues 439 to 459 form a helical membrane-spanning segment; the sequence is FGKSGGAIIQSTFFILFPAFG. At 460-465 the chain is on the extracellular side; the sequence is FVEATP. A helical membrane pass occupies residues 466-486; the sequence is YFASIFFVIVILWIYAVKGLN. Residues 487 to 498 lie on the Cytoplasmic side of the membrane; the sequence is KEYKVLVNKTEK.

It belongs to the ADP/ATP translocase tlc family.

The protein resides in the cell membrane. Provides the rickettsial cell with host ATP in exchange for rickettsial ADP. This is an obligate exchange system. This energy acquiring activity is an important component of rickettsial parasitism. This chain is ADP,ATP carrier protein 1 (tlcA), found in Rickettsia conorii (strain ATCC VR-613 / Malish 7).